Consider the following 451-residue polypeptide: Tubulin beta-4 chain (451 aa).

Residues glutamine 11, glutamate 69, serine 138, glycine 142, threonine 143, glycine 144, asparagine 204, and asparagine 226 each coordinate GTP. Glutamate 69 serves as a coordination point for Mg(2+). Polar residues predominate over residues 417 to 427 (DLVSEYQQYQD). The disordered stretch occupies residues 417–451 (DLVSEYQQYQDATAEEEGEYDEDDGGYGDEDDGMM). The span at 429–451 (TAEEEGEYDEDDGGYGDEDDGMM) shows a compositional bias: acidic residues.

This sequence belongs to the tubulin family. As to quaternary structure, dimer of alpha and beta chains. A typical microtubule is a hollow water-filled tube with an outer diameter of 25 nm and an inner diameter of 15 nM. Alpha-beta heterodimers associate head-to-tail to form protofilaments running lengthwise along the microtubule wall with the beta-tubulin subunit facing the microtubule plus end conferring a structural polarity. Microtubules usually have 13 protofilaments but different protofilament numbers can be found in some organisms and specialized cells. Mg(2+) is required as a cofactor.

The protein resides in the cytoplasm. Its subcellular location is the cytoskeleton. Functionally, tubulin is the major constituent of microtubules, a cylinder consisting of laterally associated linear protofilaments composed of alpha- and beta-tubulin heterodimers. Microtubules grow by the addition of GTP-tubulin dimers to the microtubule end, where a stabilizing cap forms. Below the cap, tubulin dimers are in GDP-bound state, owing to GTPase activity of alpha-tubulin. This chain is Tubulin beta-4 chain (TUBB4), found in Oomycete-like sp. (strain MacKay2000).